The following is a 624-amino-acid chain: tRNA uridine 5-carboxymethylaminomethyl modification enzyme MnmG (624 aa).

Residue 14 to 19 (GAGHAG) participates in FAD binding. 273–287 (GTRYCPSFEDKVVRF) serves as a coordination point for NAD(+).

This sequence belongs to the MnmG family. In terms of assembly, homodimer. Heterotetramer of two MnmE and two MnmG subunits. FAD is required as a cofactor.

The protein localises to the cytoplasm. Functionally, NAD-binding protein involved in the addition of a carboxymethylaminomethyl (cmnm) group at the wobble position (U34) of certain tRNAs, forming tRNA-cmnm(5)s(2)U34. This is tRNA uridine 5-carboxymethylaminomethyl modification enzyme MnmG from Syntrophomonas wolfei subsp. wolfei (strain DSM 2245B / Goettingen).